Here is a 214-residue protein sequence, read N- to C-terminus: FMN-dependent NADH:quinone oxidoreductase 1 (214 aa).

FMN-binding positions include 17-19 (SWS) and 144-147 (SAGG).

This sequence belongs to the azoreductase type 1 family. As to quaternary structure, homodimer. FMN is required as a cofactor.

The enzyme catalyses 2 a quinone + NADH + H(+) = 2 a 1,4-benzosemiquinone + NAD(+). It carries out the reaction N,N-dimethyl-1,4-phenylenediamine + anthranilate + 2 NAD(+) = 2-(4-dimethylaminophenyl)diazenylbenzoate + 2 NADH + 2 H(+). Its function is as follows. Quinone reductase that provides resistance to thiol-specific stress caused by electrophilic quinones. In terms of biological role, also exhibits azoreductase activity. Catalyzes the reductive cleavage of the azo bond in aromatic azo compounds to the corresponding amines. The protein is FMN-dependent NADH:quinone oxidoreductase 1 of Lactococcus lactis subsp. lactis (strain IL1403) (Streptococcus lactis).